Reading from the N-terminus, the 220-residue chain is Large ribosomal subunit protein uL1 (220 aa).

This sequence belongs to the universal ribosomal protein uL1 family. Part of the 50S ribosomal subunit.

In terms of biological role, binds directly to 23S rRNA. The L1 stalk is quite mobile in the ribosome, and is involved in E site tRNA release. Functionally, protein L1 is also a translational repressor protein, it controls the translation of the L11 operon by binding to its mRNA. This is Large ribosomal subunit protein uL1 from Ehrlichia ruminantium (strain Gardel).